Reading from the N-terminus, the 494-residue chain is ATP synthase subunit beta, chloroplastic (494 aa).

172-179 provides a ligand contact to ATP; that stretch reads GGAGVGKT.

The protein belongs to the ATPase alpha/beta chains family. As to quaternary structure, F-type ATPases have 2 components, CF(1) - the catalytic core - and CF(0) - the membrane proton channel. CF(1) has five subunits: alpha(3), beta(3), gamma(1), delta(1), epsilon(1). CF(0) has four main subunits: a(1), b(1), b'(1) and c(9-12).

The protein localises to the plastid. It is found in the chloroplast thylakoid membrane. It catalyses the reaction ATP + H2O + 4 H(+)(in) = ADP + phosphate + 5 H(+)(out). Produces ATP from ADP in the presence of a proton gradient across the membrane. The catalytic sites are hosted primarily by the beta subunits. This chain is ATP synthase subunit beta, chloroplastic, found in Physcomitrium patens (Spreading-leaved earth moss).